The primary structure comprises 157 residues: Large ribosomal subunit protein bL34c (157 aa).

The transit peptide at 1–97 (MASLSTSVVA…GQRRRGLVVR (97 aa)) directs the protein to the chloroplast.

It belongs to the bacterial ribosomal protein bL34 family. Part of the 50S ribosomal subunit.

The protein localises to the plastid. It localises to the chloroplast. Its function is as follows. This protein binds directly to 23S ribosomal RNA. The protein is Large ribosomal subunit protein bL34c (RPL34) of Arabidopsis thaliana (Mouse-ear cress).